Consider the following 198-residue polypeptide: Sulfite reductase, dissimilatory-type subunit alpha (198 aa).

[4Fe-4S] cluster-binding residues include Cys45, Cys64, Cys67, and Cys70. Residues 55-83 (GTLSIDNKNCTRCMHCINTMPRALKIGDE) enclose the 4Fe-4S ferredoxin-type domain.

As to quaternary structure, heterohexamer of two alpha, two beta and two gamma subunits.

Functionally, part of the complex that catalyzes the reduction of sulfite to sulfide. The alpha and beta subunits may have arisen by gene duplication. They both bind 2 iron-sulfur clusters, but the alpha subunit seems to be catalytically inactive, due to substitutions along the putative substrate access channel, and because it binds sirohydrochlorin (the dematallated form of siroheme) instead of siroheme. In Megalodesulfovibrio gigas (strain ATCC 19364 / DSM 1382 / NCIMB 9332 / VKM B-1759) (Desulfovibrio gigas), this protein is Sulfite reductase, dissimilatory-type subunit alpha (dsrA).